We begin with the raw amino-acid sequence, 248 residues long: uncharacterized protein (248 aa).

A signal peptide spans 1–26 (MVAPRISPKIVLVGFALFAIISASLA).

This is an uncharacterized protein from Acanthamoeba polyphaga mimivirus (APMV).